A 449-amino-acid polypeptide reads, in one-letter code: Cysteine--tRNA ligase (449 aa).

Position 29 (C29) interacts with Zn(2+). The short motif at 31–41 (PTVYDHLHIGN) is the 'HIGH' region element. Residues C211, H236, and E240 each coordinate Zn(2+). The short motif at 269–273 (KMSKS) is the 'KMSKS' region element. K272 is an ATP binding site.

Belongs to the class-I aminoacyl-tRNA synthetase family. In terms of assembly, monomer. It depends on Zn(2+) as a cofactor.

It is found in the cytoplasm. The catalysed reaction is tRNA(Cys) + L-cysteine + ATP = L-cysteinyl-tRNA(Cys) + AMP + diphosphate. This is Cysteine--tRNA ligase from Methylocella silvestris (strain DSM 15510 / CIP 108128 / LMG 27833 / NCIMB 13906 / BL2).